The sequence spans 471 residues: Abscisic acid 8'-hydroxylase 1 (471 aa).

A helical transmembrane segment spans residues 1-21 (MGAFLLFVCVLAPFLLVCAVR). C415 serves as a coordination point for heme.

The protein belongs to the cytochrome P450 family. It depends on heme as a cofactor. As to expression, in seedlings and expanding leaves.

The protein resides in the membrane. The catalysed reaction is 2-cis-(+)-abscisate + reduced [NADPH--hemoprotein reductase] + O2 = (+)-8'-hydroxyabscisate + oxidized [NADPH--hemoprotein reductase] + H2O + H(+). Its pathway is plant hormone degradation; abscisic acid degradation. Involved in the oxidative degradation of abscisic acid. The protein is Abscisic acid 8'-hydroxylase 1 (CYP707A5) of Oryza sativa subsp. indica (Rice).